A 159-amino-acid chain; its full sequence is Protein Smg homolog (159 aa).

Belongs to the Smg family.

This is Protein Smg homolog from Nitrosococcus oceani (strain ATCC 19707 / BCRC 17464 / JCM 30415 / NCIMB 11848 / C-107).